Reading from the N-terminus, the 320-residue chain is GTPase Era (320 aa).

The region spanning 25-193 (HCGFIAIVGR…RKHVRNHLPK (169 aa)) is the Era-type G domain. The segment at 33–40 (GRPNVGKS) is G1. GTP is bound at residue 33-40 (GRPNVGKS). The segment at 59-63 (QTTRH) is G2. The G3 stretch occupies residues 80-83 (DTPG). Residues 80 to 84 (DTPGL) and 142 to 145 (NKVD) each bind GTP. The interval 142-145 (NKVD) is G4. A G5 region spans residues 172–174 (ISA). Residues 216 to 302 (VREKLMRFTG…YLETWVKVKS (87 aa)) enclose the KH type-2 domain.

The protein belongs to the TRAFAC class TrmE-Era-EngA-EngB-Septin-like GTPase superfamily. Era GTPase family. In terms of assembly, monomer.

It localises to the cytoplasm. It is found in the cell inner membrane. Its function is as follows. An essential GTPase that binds both GDP and GTP, with rapid nucleotide exchange. Plays a role in 16S rRNA processing and 30S ribosomal subunit biogenesis and possibly also in cell cycle regulation and energy metabolism. This Vibrio parahaemolyticus serotype O3:K6 (strain RIMD 2210633) protein is GTPase Era.